The primary structure comprises 219 residues: Ribose-5-phosphate isomerase A (219 aa).

Substrate contacts are provided by residues 28–31, 81–84, and 94–97; these read TGST, DGAD, and KGGG. The Proton acceptor role is filled by glutamate 103. Position 121 (lysine 121) interacts with substrate.

The protein belongs to the ribose 5-phosphate isomerase family. In terms of assembly, homodimer.

It carries out the reaction aldehydo-D-ribose 5-phosphate = D-ribulose 5-phosphate. It functions in the pathway carbohydrate degradation; pentose phosphate pathway; D-ribose 5-phosphate from D-ribulose 5-phosphate (non-oxidative stage): step 1/1. In terms of biological role, catalyzes the reversible conversion of ribose-5-phosphate to ribulose 5-phosphate. This Photorhabdus laumondii subsp. laumondii (strain DSM 15139 / CIP 105565 / TT01) (Photorhabdus luminescens subsp. laumondii) protein is Ribose-5-phosphate isomerase A.